The following is a 474-amino-acid chain: Dihydrolipoyl dehydrogenase (474 aa).

Residues 36-45 (ERYNTLGGVC), K54, and G117 contribute to the FAD site. An intrachain disulfide couples C45 to C50. NAD(+) is bound by residues 182 to 186 (GGGII) and E205. K220 carries the post-translational modification N6-acetyllysine. Residues V238 and 270 to 273 (AIGR) each bind NAD(+). Positions 313 and 321 each coordinate FAD. Catalysis depends on H445, which acts as the Proton acceptor.

It belongs to the class-I pyridine nucleotide-disulfide oxidoreductase family. As to quaternary structure, homodimer. FAD is required as a cofactor.

Its subcellular location is the cytoplasm. It carries out the reaction N(6)-[(R)-dihydrolipoyl]-L-lysyl-[protein] + NAD(+) = N(6)-[(R)-lipoyl]-L-lysyl-[protein] + NADH + H(+). Functionally, lipoamide dehydrogenase is a component of the glycine cleavage system as well as of the alpha-ketoacid dehydrogenase complexes. The chain is Dihydrolipoyl dehydrogenase (lpdA) from Shigella flexneri.